The sequence spans 355 residues: Nicotinate-nucleotide--dimethylbenzimidazole phosphoribosyltransferase (355 aa).

Residue Glu321 is the Proton acceptor of the active site.

Belongs to the CobT family.

It catalyses the reaction 5,6-dimethylbenzimidazole + nicotinate beta-D-ribonucleotide = alpha-ribazole 5'-phosphate + nicotinate + H(+). It functions in the pathway nucleoside biosynthesis; alpha-ribazole biosynthesis; alpha-ribazole from 5,6-dimethylbenzimidazole: step 1/2. Functionally, catalyzes the synthesis of alpha-ribazole-5'-phosphate from nicotinate mononucleotide (NAMN) and 5,6-dimethylbenzimidazole (DMB). This chain is Nicotinate-nucleotide--dimethylbenzimidazole phosphoribosyltransferase, found in Desulfotalea psychrophila (strain LSv54 / DSM 12343).